We begin with the raw amino-acid sequence, 404 residues long: Sorting nexin-5 (404 aa).

At alanine 2 the chain carries N-acetylalanine. Residues 25-172 enclose the PX domain; the sequence is LNVDPSLQID…HVFLEYDQDL (148 aa). A 1,2-diacyl-sn-glycero-3-phospho-(1D-myo-inositol-4,5-bisphosphate)-binding positions include 40–46, 99–105, and 113–116; these read SERDKVK, FDGPREK, and EGSM. The interval 169-261 is interaction with DOCK1; it reads DQDLSVRRKN…HSLALEEPTV (93 aa). A membrane-binding amphipathic helix region spans residues 183 to 200; it reads FGGFFKSVVKSADEVLFS. At serine 193 the chain carries Phosphoserine. The BAR domain maps to 202–404; the sequence is VKEVDDFFEQ…QSCIDLFKNN (203 aa). Position 275 is an N6-acetyllysine (lysine 275).

This sequence belongs to the sorting nexin family. Forms heterodimers with BAR domain-containing sorting nexins SNX1 and SNX2; does not homodimerize. The heterodimers are proposed to self-assemble into helical arrays on the membrane to stabilize and expand local membrane curvature underlying endosomal tubule formation. Thought to be a component of the originally described retromer complex (also called SNX-BAR retromer) which is a pentamer containing the heterotrimeric retromer cargo-selective complex (CSC), also described as vacuolar protein sorting subcomplex (VPS), and a heterodimeric membrane-deforming subcomplex formed between SNX1 or SNX2 and SNX5 or SNX6 (also called SNX-BAR subcomplex); the respective CSC and SNX-BAR subcomplexes associate with low affinity. Interacts with SNX1, SNX2, VPS26A, VPS29, VPS35, DCTN1, DOCK1, MIB1, PIP5K1C. Interacts with HGS; increased by PIP5K1C kinase activity and by PtdIns(3P) and/or PtdIns(3,4)P2.

It is found in the endosome. Its subcellular location is the early endosome. The protein resides in the early endosome membrane. The protein localises to the cell membrane. It localises to the cytoplasmic vesicle membrane. It is found in the cytoplasm. Its subcellular location is the cell projection. The protein resides in the phagocytic cup. The protein localises to the ruffle. In terms of biological role, involved in several stages of intracellular trafficking. Interacts with membranes containing phosphatidylinositol lipids. Acts in part as component of the retromer membrane-deforming SNX-BAR subcomplex. The SNX-BAR retromer mediates retrograde transport of cargo proteins from endosomes to the trans-Golgi network (TGN) and is involved in endosome-to-plasma membrane transport for cargo protein recycling. The SNX-BAR subcomplex functions to deform the donor membrane into a tubular profile called endosome-to-TGN transport carrier (ETC). Does not have in vitro vesicle-to-membrane remodeling activity. Involved in retrograde transport of lysosomal enzyme receptor IGF2R. May function as link between endosomal transport vesicles and dynactin. Plays a role in the internalization of EGFR after EGF stimulation. Involved in EGFR endosomal sorting and degradation; the function involves PIP5K1C and is retromer-independent. Together with PIP5K1C facilitates HGS interaction with ubiquitinated EGFR, which initiates EGFR sorting to intraluminal vesicles (ILVs) of the multivesicular body for subsequent lysosomal degradation. Involved in E-cadherin sorting and degradation; inhibits PIP5K1C-mediated E-cadherin degradation. Plays a role in macropinocytosis. This Bos taurus (Bovine) protein is Sorting nexin-5 (SNX5).